Consider the following 95-residue polypeptide: Aspartyl/glutamyl-tRNA(Asn/Gln) amidotransferase subunit C (95 aa).

It belongs to the GatC family. Heterotrimer of A, B and C subunits.

The enzyme catalyses L-glutamyl-tRNA(Gln) + L-glutamine + ATP + H2O = L-glutaminyl-tRNA(Gln) + L-glutamate + ADP + phosphate + H(+). The catalysed reaction is L-aspartyl-tRNA(Asn) + L-glutamine + ATP + H2O = L-asparaginyl-tRNA(Asn) + L-glutamate + ADP + phosphate + 2 H(+). In terms of biological role, allows the formation of correctly charged Asn-tRNA(Asn) or Gln-tRNA(Gln) through the transamidation of misacylated Asp-tRNA(Asn) or Glu-tRNA(Gln) in organisms which lack either or both of asparaginyl-tRNA or glutaminyl-tRNA synthetases. The reaction takes place in the presence of glutamine and ATP through an activated phospho-Asp-tRNA(Asn) or phospho-Glu-tRNA(Gln). The chain is Aspartyl/glutamyl-tRNA(Asn/Gln) amidotransferase subunit C from Bradyrhizobium sp. (strain ORS 278).